Consider the following 81-residue polypeptide: ATP synthase subunit c (81 aa).

2 helical membrane-spanning segments follow: residues 4–24 (MIAQ…AIGA) and 57–77 (VGLV…FVFA).

It belongs to the ATPase C chain family. As to quaternary structure, F-type ATPases have 2 components, F(1) - the catalytic core - and F(0) - the membrane proton channel. F(1) has five subunits: alpha(3), beta(3), gamma(1), delta(1), epsilon(1). F(0) has three main subunits: a(1), b(2) and c(10-14). The alpha and beta chains form an alternating ring which encloses part of the gamma chain. F(1) is attached to F(0) by a central stalk formed by the gamma and epsilon chains, while a peripheral stalk is formed by the delta and b chains.

Its subcellular location is the cell membrane. F(1)F(0) ATP synthase produces ATP from ADP in the presence of a proton or sodium gradient. F-type ATPases consist of two structural domains, F(1) containing the extramembraneous catalytic core and F(0) containing the membrane proton channel, linked together by a central stalk and a peripheral stalk. During catalysis, ATP synthesis in the catalytic domain of F(1) is coupled via a rotary mechanism of the central stalk subunits to proton translocation. Functionally, key component of the F(0) channel; it plays a direct role in translocation across the membrane. A homomeric c-ring of between 10-14 subunits forms the central stalk rotor element with the F(1) delta and epsilon subunits. The polypeptide is ATP synthase subunit c (Mycobacterium leprae (strain TN)).